A 198-amino-acid polypeptide reads, in one-letter code: Shikimate kinase (198 aa).

26–31 (GSGKSQ) provides a ligand contact to ATP. Residue Ser30 participates in Mg(2+) binding. The substrate site is built by Asp48, Arg72, and Gly94. Arg132 contributes to the ATP binding site. Arg151 provides a ligand contact to substrate. Gln167 serves as a coordination point for ATP.

Belongs to the shikimate kinase family. In terms of assembly, monomer. It depends on Mg(2+) as a cofactor.

The protein localises to the cytoplasm. The catalysed reaction is shikimate + ATP = 3-phosphoshikimate + ADP + H(+). It functions in the pathway metabolic intermediate biosynthesis; chorismate biosynthesis; chorismate from D-erythrose 4-phosphate and phosphoenolpyruvate: step 5/7. Catalyzes the specific phosphorylation of the 3-hydroxyl group of shikimic acid using ATP as a cosubstrate. This chain is Shikimate kinase, found in Prochlorococcus marinus (strain NATL2A).